The sequence spans 84 residues: METVITATIIGASILLAFAALGTAIGFAILGGKFLESSARQPELASSLQTKMFIVAGLLDAIAMIAVGISLLFIFANPFIDLLK.

The next 2 helical transmembrane spans lie at 9–29 (IIGASILLAFAALGTAIGFAI) and 54–74 (IVAGLLDAIAMIAVGISLLFI).

It belongs to the ATPase C chain family. F-type ATPases have 2 components, F(1) - the catalytic core - and F(0) - the membrane proton channel. F(1) has five subunits: alpha(3), beta(3), gamma(1), delta(1), epsilon(1). F(0) has three main subunits: a(1), b(2) and c(10-14). The alpha and beta chains form an alternating ring which encloses part of the gamma chain. F(1) is attached to F(0) by a central stalk formed by the gamma and epsilon chains, while a peripheral stalk is formed by the delta and b chains.

Its subcellular location is the cell inner membrane. F(1)F(0) ATP synthase produces ATP from ADP in the presence of a proton or sodium gradient. F-type ATPases consist of two structural domains, F(1) containing the extramembraneous catalytic core and F(0) containing the membrane proton channel, linked together by a central stalk and a peripheral stalk. During catalysis, ATP synthesis in the catalytic domain of F(1) is coupled via a rotary mechanism of the central stalk subunits to proton translocation. Its function is as follows. Key component of the F(0) channel; it plays a direct role in translocation across the membrane. A homomeric c-ring of between 10-14 subunits forms the central stalk rotor element with the F(1) delta and epsilon subunits. The chain is ATP synthase subunit c from Glaesserella parasuis serovar 5 (strain SH0165) (Haemophilus parasuis).